The sequence spans 358 residues: tRNA-specific 2-thiouridylase MnmA (358 aa).

ATP contacts are provided by residues alanine 7 to serine 14 and methionine 33. Catalysis depends on cysteine 102, which acts as the Nucleophile. A disulfide bridge links cysteine 102 with cysteine 199. Glycine 126 is a binding site for ATP. An interaction with tRNA region spans residues lysine 149–glutamine 151. Cysteine 199 functions as the Cysteine persulfide intermediate in the catalytic mechanism. Positions arginine 305–tyrosine 306 are interaction with tRNA.

Belongs to the MnmA/TRMU family.

It localises to the cytoplasm. It carries out the reaction S-sulfanyl-L-cysteinyl-[protein] + uridine(34) in tRNA + AH2 + ATP = 2-thiouridine(34) in tRNA + L-cysteinyl-[protein] + A + AMP + diphosphate + H(+). Its function is as follows. Catalyzes the 2-thiolation of uridine at the wobble position (U34) of tRNA, leading to the formation of s(2)U34. The chain is tRNA-specific 2-thiouridylase MnmA from Halothermothrix orenii (strain H 168 / OCM 544 / DSM 9562).